The sequence spans 371 residues: DNA replication and repair protein RecF (371 aa).

30-37 (GENAQGKT) provides a ligand contact to ATP.

Belongs to the RecF family.

The protein localises to the cytoplasm. The RecF protein is involved in DNA metabolism; it is required for DNA replication and normal SOS inducibility. RecF binds preferentially to single-stranded, linear DNA. It also seems to bind ATP. In Staphylococcus epidermidis (strain ATCC 35984 / DSM 28319 / BCRC 17069 / CCUG 31568 / BM 3577 / RP62A), this protein is DNA replication and repair protein RecF.